Here is a 100-residue protein sequence, read N- to C-terminus: Cell division protein DrpB (100 aa).

The Cytoplasmic portion of the chain corresponds to methionine 1–proline 16. Residues glycine 17–alanine 37 traverse the membrane as a helical segment. Residues arginine 38–lysine 64 are Periplasmic-facing. Residues tryptophan 65–isoleucine 85 traverse the membrane as a helical segment. The Cytoplasmic portion of the chain corresponds to alanine 86–glutamate 100.

It belongs to the DrpB family. In terms of assembly, bacterial adenylate cyclase hybrid (BACTH) studies show interaction of this protein with DamX, FtsI, FtsN, FtsQ, YmgF, DedD, FtsA and MalF, as well as weaker interactions with DedD, MalG and PBP2, but this assay often generates false positive results.

It localises to the cell inner membrane. A non-essential division protein that localizes to the septal ring in low ionic strength medium. In terms of biological role, localizes to the septal ring in about 30% of observed cells before cell constriction occurs; localization occurs in low ionic strength medium (0 NaCl) and requires FtsZ but not FtsEX. Overexpression partially restores correct FtsI localization to the division septum in an ftsEX deletion. Isolated as a multicopy suppressor of an ftsEX deletion mutant; it does not suppress other cell division defects (e.g. ftsA, ftsI, ftsQ or ftsZ). This Escherichia coli (strain K12) protein is Cell division protein DrpB.